The sequence spans 332 residues: Phenylalanine--tRNA ligase alpha subunit (332 aa).

Glutamate 252 serves as a coordination point for Mg(2+).

The protein belongs to the class-II aminoacyl-tRNA synthetase family. Phe-tRNA synthetase alpha subunit type 1 subfamily. As to quaternary structure, tetramer of two alpha and two beta subunits. Requires Mg(2+) as cofactor.

The protein localises to the cytoplasm. It catalyses the reaction tRNA(Phe) + L-phenylalanine + ATP = L-phenylalanyl-tRNA(Phe) + AMP + diphosphate + H(+). The chain is Phenylalanine--tRNA ligase alpha subunit from Marinobacter nauticus (strain ATCC 700491 / DSM 11845 / VT8) (Marinobacter aquaeolei).